Consider the following 282-residue polypeptide: uncharacterized protein (282 aa).

The next 4 helical transmembrane spans lie at 130–150 (WALL…GFGL), 170–190 (STSW…WPSA), 191–211 (AAGL…YVIV), and 223–243 (ILTH…WRSA). Residues 263 to 282 (DNASRGRRRGHLWPTDGSAA) are disordered.

The protein localises to the cell membrane. This is an uncharacterized protein from Mycobacterium tuberculosis (strain CDC 1551 / Oshkosh).